A 914-amino-acid polypeptide reads, in one-letter code: NADH-quinone oxidoreductase subunit G (914 aa).

Positions 1-83 constitute a 2Fe-2S ferredoxin-type domain; the sequence is MATIHVDGKE…GTFISIDDSE (83 aa). Residues Cys-34, Cys-45, Cys-48, and Cys-67 each contribute to the [2Fe-2S] cluster site. The region spanning 83–122 is the 4Fe-4S His(Cys)3-ligated-type domain; sequence EAKAFRESVVEWLMTNHPHDCPVCEEGGNCHLQDMTVMTG. The [4Fe-4S] cluster site is built by His-99, Cys-103, Cys-106, Cys-112, Cys-151, Cys-154, Cys-157, Cys-201, Cys-228, Cys-231, Cys-235, and Cys-263. The 4Fe-4S Mo/W bis-MGD-type domain maps to 221–277; it reads MQFAPSICQQCSVGCNTSPGERYGELRRIENRYNGSVNHYFMCDRGRFGYGYVNLKD.

Belongs to the complex I 75 kDa subunit family. Composed of 13 different subunits. Subunits NuoCD, E, F, and G constitute the peripheral sector of the complex. [2Fe-2S] cluster is required as a cofactor. Requires [4Fe-4S] cluster as cofactor.

The catalysed reaction is a quinone + NADH + 5 H(+)(in) = a quinol + NAD(+) + 4 H(+)(out). Its function is as follows. NDH-1 shuttles electrons from NADH, via FMN and iron-sulfur (Fe-S) centers, to quinones in the respiratory chain. The immediate electron acceptor for the enzyme in this species is believed to be ubiquinone. Couples the redox reaction to proton translocation (for every two electrons transferred, four hydrogen ions are translocated across the cytoplasmic membrane), and thus conserves the redox energy in a proton gradient. The protein is NADH-quinone oxidoreductase subunit G (nuoG) of Yersinia pestis.